The following is a 356-amino-acid chain: NADH-quinone oxidoreductase subunit H (356 aa).

Transmembrane regions (helical) follow at residues 17-37, 51-71, 83-103, 116-136, 162-182, 202-222, 261-281, 295-315, and 334-354; these read TGGI…LLLA, PNVV…KFVL, VVFI…WAVV, VGIL…IMGG, IGLI…STIV, LVLL…ALAE, IVLM…PGFP, LFLA…FAMA, and VFLP…VFGP.

Belongs to the complex I subunit 1 family. As to quaternary structure, NDH-1 is composed of 14 different subunits. Subunits NuoA, H, J, K, L, M, N constitute the membrane sector of the complex.

It is found in the cell inner membrane. It carries out the reaction a quinone + NADH + 5 H(+)(in) = a quinol + NAD(+) + 4 H(+)(out). In terms of biological role, NDH-1 shuttles electrons from NADH, via FMN and iron-sulfur (Fe-S) centers, to quinones in the respiratory chain. The immediate electron acceptor for the enzyme in this species is believed to be ubiquinone. Couples the redox reaction to proton translocation (for every two electrons transferred, four hydrogen ions are translocated across the cytoplasmic membrane), and thus conserves the redox energy in a proton gradient. This subunit may bind ubiquinone. This chain is NADH-quinone oxidoreductase subunit H, found in Caulobacter vibrioides (strain ATCC 19089 / CIP 103742 / CB 15) (Caulobacter crescentus).